We begin with the raw amino-acid sequence, 299 residues long: Recombination-associated protein RdgC (299 aa).

This sequence belongs to the RdgC family.

The protein resides in the cytoplasm. It is found in the nucleoid. In terms of biological role, may be involved in recombination. In Neisseria meningitidis serogroup A / serotype 4A (strain DSM 15465 / Z2491), this protein is Recombination-associated protein RdgC.